Consider the following 798-residue polypeptide: Serine/threonine-protein kinase haspin (798 aa).

A disordered region spans residues 1 to 110 (MAASLPGPGS…WKLRARPSLT (110 aa)). Position 58 is a phosphoserine (Ser58). Positions 59–70 (QSDDPDDPDDPD) are enriched in acidic residues. Ser93 carries the phosphoserine; by AURKB modification. The residue at position 97 (Thr97) is a Phosphothreonine. Ser143 carries the post-translational modification Phosphoserine; by AURKB. Position 147 is a phosphoserine (Ser147). Positions 275-350 (LVVGNGPEGP…KHQEATETSL (76 aa)) are disordered. The segment covering 300–315 (CQERGLQEAVRREHQE) has biased composition (basic and acidic residues). Positions 484–798 (LQRCEKIGEG…DLLCQHSLFK (315 aa)) constitute a Protein kinase domain. Residues 490 to 498 (IGEGVFGEV), Lys511, 606 to 611 (EFGGID), 649 to 654 (DLHWGN), and 687 to 689 (DYT) each bind ATP. The active-site Proton acceptor is the Asp649.

It belongs to the protein kinase superfamily. Ser/Thr protein kinase family. Haspin subfamily. Mg(2+) is required as a cofactor. Post-translationally, autophosphorylated on both serine and threonine residues. Strongly phosphorylated during mitosis but this does not appear to significantly affect its intrinsic kinase activity. Phosphorylation by AURKB is required for full activity toward histone H3 at 'Ser-3' in mitosis. In terms of tissue distribution, strongly expressed in testis. Also present in thymus and bone marrow and low levels observed in prostate, intestine, lung, spleen and lymph node. Expressed in fetal skin, liver, kidney and small intestine and also in proliferating but not non-proliferating cell lines.

It localises to the nucleus. Its subcellular location is the chromosome. The protein localises to the cytoplasm. It is found in the cytoskeleton. The protein resides in the spindle. It carries out the reaction L-seryl-[protein] + ATP = O-phospho-L-seryl-[protein] + ADP + H(+). It catalyses the reaction L-threonyl-[protein] + ATP = O-phospho-L-threonyl-[protein] + ADP + H(+). With respect to regulation, constitutive activity that does not require phosphorylation. Specifically inhibited by 3-(1H-indazol-5-yl)-N-propylimidazo[1,2-b]pyridazin-6-amine (CHR-6494). Functionally, serine/threonine-protein kinase that phosphorylates histone H3 at 'Thr-3' (H3T3ph) during mitosis. May act through H3T3ph to both position and modulate activation of AURKB and other components of the chromosomal passenger complex (CPC) at centromeres to ensure proper chromatid cohesion, metaphase alignment and normal progression through the cell cycle. The chain is Serine/threonine-protein kinase haspin from Homo sapiens (Human).